We begin with the raw amino-acid sequence, 208 residues long: Large ribosomal subunit protein uL4 (208 aa).

Positions 45 to 89 are disordered; the sequence is RQGTHAHKNRSAVSGGGKKPWRQKGTGRARQGSTRSPQWRGGGTV.

The protein belongs to the universal ribosomal protein uL4 family. In terms of assembly, part of the 50S ribosomal subunit.

One of the primary rRNA binding proteins, this protein initially binds near the 5'-end of the 23S rRNA. It is important during the early stages of 50S assembly. It makes multiple contacts with different domains of the 23S rRNA in the assembled 50S subunit and ribosome. Its function is as follows. Forms part of the polypeptide exit tunnel. The sequence is that of Large ribosomal subunit protein uL4 from Lactococcus lactis subsp. cremoris (strain MG1363).